A 1026-amino-acid chain; its full sequence is Multidrug resistance protein MdtC (1026 aa).

Transmembrane regions (helical) follow at residues Ile15–Ala35, Glu333–Leu353, Leu360–Cys380, Leu387–Leu407, Val431–Leu451, Phe463–Pro483, Leu528–Pro548, Leu853–Ser873, Leu897–Val917, Pro953–Gly973, and Ile984–Val1004.

It belongs to the resistance-nodulation-cell division (RND) (TC 2.A.6) family. MdtC subfamily. In terms of assembly, part of a tripartite efflux system composed of MdtA, MdtB and MdtC. MdtC forms a heteromultimer with MdtB.

The protein localises to the cell inner membrane. The polypeptide is Multidrug resistance protein MdtC (Salmonella heidelberg (strain SL476)).